The sequence spans 369 residues: Superinfection exclusion protein (369 aa).

The signal sequence occupies residues 1–15 (MIALLILSLTCSVST).

Belongs to the serpin family. Orthopoxvirus OPG040 subfamily. In terms of assembly, interacts with A56 protein.

It is found in the virion membrane. Its subcellular location is the host cell membrane. In terms of biological role, prevents cell to cell fusion via its interaction with A56 protein. The A56-K2 complex associates with components of the entry fusion complex (EFC) presumably to avoid superinfection and syncytium formation. The chain is Superinfection exclusion protein (OPG040) from Vaccinia virus (strain Copenhagen) (VACV).